Reading from the N-terminus, the 1108-residue chain is Serine/threonine-protein kinase AKL1 (1108 aa).

Serine 2 bears the N-acetylserine mark. Serine 10 is subject to Phosphoserine. The region spanning 35–319 (VEVVNYLAEG…IYQVLYHLCE (285 aa)) is the Protein kinase domain. ATP is bound by residues 41-49 (LAEGGFAQI) and lysine 70. The active-site Proton acceptor is aspartate 181. The tract at residues 405–466 (IPSQNVGQEL…QSPGIEDKSI (62 aa)) is disordered. Position 407 is a phosphoserine (serine 407). Basic and acidic residues predominate over residues 419–435 (ESQSDQRKSTLSEDKSS). The segment covering 436 to 449 (RTTSNANSSGTANN) has biased composition (low complexity). At threonine 471 the chain carries Phosphothreonine. A compositionally biased stretch (polar residues) spans 493–513 (KQSSDPTISEQSPRLNTQSLP). The interval 493 to 534 (KQSSDPTISEQSPRLNTQSLPQRQKSTSSYSSGGRSMKSTSY) is disordered. Residue serine 504 is modified to Phosphoserine. Positions 514–534 (QRQKSTSSYSSGGRSMKSTSY) are enriched in low complexity. 2 positions are modified to phosphoserine: serine 541 and serine 574. Residues 590 to 629 (QQQGQRYQQAQNQTGTQGNTFPDESQYQSRVEQQQQQQDQ) show a composition bias toward low complexity. Disordered regions lie at residues 590-663 (QQQG…GDSG) and 765-791 (EDMR…HSSS). Residues 781-791 (NSANEPMHSSS) are compositionally biased toward polar residues. Serine 801 carries the post-translational modification Phosphoserine. The segment at 807–838 (AGKQSFQDTNEPQTGGIEDAGGSGTIKGSNNN) is disordered. Residues 810 to 819 (QSFQDTNEPQ) show a composition bias toward polar residues. Serine 846 is subject to Phosphoserine. Positions 858-1108 (GAAVSSFSSS…SFFSVFRSEK (251 aa)) are disordered. Residues 859–872 (AAVSSFSSSSSSAS) are compositionally biased toward low complexity. Over residues 910–934 (DDARRGKTAERRPLHNERGHKDQAR) the composition is skewed to basic and acidic residues. Polar residues predominate over residues 935-976 (SSDASKSNQFKSKDFSSVSTRQPRQSLDLNFQEVNLSSPTLT). Phosphoserine occurs at positions 953 and 960. Over residues 1006–1048 (ENKRHSTGHELSTRSNGKHETHRTGSKQRHDLERYRHSKDKDS) the composition is skewed to basic and acidic residues. Residues lysine 1008 and lysine 1046 each participate in a glycyl lysine isopeptide (Lys-Gly) (interchain with G-Cter in ubiquitin) cross-link. Serine 1048 carries the phosphoserine modification. Over residues 1049–1060 (NSSITISTSTPS) the composition is skewed to low complexity. Positions 1071–1082 (QSLDLERVRREA) are enriched in basic and acidic residues. Phosphoserine is present on serine 1072.

Belongs to the protein kinase superfamily. Ser/Thr protein kinase family.

It catalyses the reaction L-seryl-[protein] + ATP = O-phospho-L-seryl-[protein] + ADP + H(+). The catalysed reaction is L-threonyl-[protein] + ATP = O-phospho-L-threonyl-[protein] + ADP + H(+). Phosphorylates SCD5. The sequence is that of Serine/threonine-protein kinase AKL1 (AKL1) from Saccharomyces cerevisiae (strain ATCC 204508 / S288c) (Baker's yeast).